Consider the following 356-residue polypeptide: Arginine kinase Lit v 2.0101 (356 aa).

Positions 9-91 (KLEAGFKKLE…FDPIIEDYHV (83 aa)) constitute a Phosphagen kinase N-terminal domain. Residue 64–68 (GVGIY) coordinates L-arginine. In terms of domain architecture, Phosphagen kinase C-terminal spans 119–356 (FVISTRVRCG…LELIKIEKEM (238 aa)). Residues 122 to 126 (STRVR) and H185 contribute to the ATP site. E225 contacts L-arginine. R229 is a binding site for ATP. C271 contributes to the L-arginine binding site. Residues 280-284 (RASVH) and 309-314 (RGTRGE) each bind ATP. E314 is a binding site for L-arginine.

Belongs to the ATP:guanido phosphotransferase family. In terms of assembly, monomer. Muscle (at protein level).

The enzyme catalyses L-arginine + ATP = N(omega)-phospho-L-arginine + ADP + H(+). The catalysed reaction is dTDP + ATP = dTTP + ADP. Its function is as follows. Catalyzes the reversible transfer of high energy ATP gamma-phosphate group to L-arginine. Has nucleoside diphosphate kinase-like activity toward dTDP. Binds and phosphorylates dTDP using ATP as a phosphate donor. Does not phosphorylate dADP, dCDP, dGDP, dTMP or thymidine. The sequence is that of Arginine kinase Lit v 2.0101 from Penaeus vannamei (Whiteleg shrimp).